We begin with the raw amino-acid sequence, 383 residues long: ATP phosphoribosyltransferase regulatory subunit (383 aa).

The protein belongs to the class-II aminoacyl-tRNA synthetase family. HisZ subfamily. In terms of assembly, heteromultimer composed of HisG and HisZ subunits.

The protein resides in the cytoplasm. Its pathway is amino-acid biosynthesis; L-histidine biosynthesis; L-histidine from 5-phospho-alpha-D-ribose 1-diphosphate: step 1/9. Its function is as follows. Required for the first step of histidine biosynthesis. May allow the feedback regulation of ATP phosphoribosyltransferase activity by histidine. In Cupriavidus necator (strain ATCC 17699 / DSM 428 / KCTC 22496 / NCIMB 10442 / H16 / Stanier 337) (Ralstonia eutropha), this protein is ATP phosphoribosyltransferase regulatory subunit.